The following is a 312-amino-acid chain: Glyoxylate/hydroxypyruvate reductase A (312 aa).

The active site involves arginine 227. Catalysis depends on histidine 275, which acts as the Proton donor.

This sequence belongs to the D-isomer specific 2-hydroxyacid dehydrogenase family. GhrA subfamily.

It localises to the cytoplasm. It carries out the reaction glycolate + NADP(+) = glyoxylate + NADPH + H(+). It catalyses the reaction (R)-glycerate + NAD(+) = 3-hydroxypyruvate + NADH + H(+). The catalysed reaction is (R)-glycerate + NADP(+) = 3-hydroxypyruvate + NADPH + H(+). Catalyzes the NADPH-dependent reduction of glyoxylate and hydroxypyruvate into glycolate and glycerate, respectively. The chain is Glyoxylate/hydroxypyruvate reductase A from Salmonella heidelberg (strain SL476).